The following is a 371-amino-acid chain: uncharacterized protein (371 aa).

His76 contacts Zn(2+). Asp78 is a catalytic residue. Position 106 (Asp106) interacts with Zn(2+). Residue Glu139 is the Proton acceptor of the active site. Zn(2+) is bound by residues Glu140, Asp163, and His344.

It belongs to the peptidase M20A family. It depends on Zn(2+) as a cofactor.

Its function is as follows. Could be a peptidase. This is an uncharacterized protein from Bacillus subtilis (strain 168).